The following is a 301-amino-acid chain: Nucleotide-binding protein MAB_2783c (301 aa).

24-31 (GLSGAGRG) provides a ligand contact to ATP. Residue 75-78 (DVRS) coordinates GTP.

The protein belongs to the RapZ-like family.

In terms of biological role, displays ATPase and GTPase activities. The chain is Nucleotide-binding protein MAB_2783c from Mycobacteroides abscessus (strain ATCC 19977 / DSM 44196 / CCUG 20993 / CIP 104536 / JCM 13569 / NCTC 13031 / TMC 1543 / L948) (Mycobacterium abscessus).